The sequence spans 98 residues: snRNA-activating protein complex subunit 5 (98 aa).

A compositionally biased stretch (polar residues) spans Gln73–Ser82. Residues Gln73–Ser98 form a disordered region. The residue at position 85 (Thr85) is a Phosphothreonine. Residues Glu86–Ser98 show a composition bias toward acidic residues.

Part of the SNAPc complex composed of 5 subunits: SNAPC1, SNAPC2, SNAPC3, SNAPC4 and SNAPC5. SNAPC5 interacts with SNAPC4.

The protein resides in the nucleus. Part of the SNAPc complex required for the transcription of both RNA polymerase II and III small-nuclear RNA genes. Binds to the proximal sequence element (PSE), a non-TATA-box basal promoter element common to these 2 types of genes. Recruits TBP and BRF2 to the U6 snRNA TATA box. This is snRNA-activating protein complex subunit 5 (SNAPC5) from Homo sapiens (Human).